The chain runs to 264 residues: Tritrans,polycis-undecaprenyl-diphosphate synthase (geranylgeranyl-diphosphate specific) (264 aa).

The active site involves Asp-43. Residue Asp-43 participates in Mg(2+) binding. Residues 44 to 47, Trp-48, His-60, and 88 to 90 contribute to the substrate site; these read GNRR and STE. The Proton acceptor role is filled by Asn-91. Substrate contacts are provided by residues Phe-92, Arg-94, Arg-213, and 219–221; that span reads RIS. Glu-232 is a binding site for Mg(2+).

This sequence belongs to the UPP synthase family. As to quaternary structure, homodimer. Mg(2+) is required as a cofactor.

It carries out the reaction geranylgeranyl diphosphate + 7 isopentenyl diphosphate = tri-trans,hepta-cis-undecaprenyl diphosphate + 7 diphosphate. Functionally, catalyzes the sequential condensation of isopentenyl diphosphate (IPP) with geranylgeranyl diphosphate (GGPP) to yield (2Z,6Z,10Z,14Z,18Z,22Z,26Z,30E,34E,38E)-undecaprenyl diphosphate (tritrans,heptacis-UPP). It is probably the precursor of glycosyl carrier lipids. In Pyrococcus abyssi (strain GE5 / Orsay), this protein is Tritrans,polycis-undecaprenyl-diphosphate synthase (geranylgeranyl-diphosphate specific).